A 589-amino-acid chain; its full sequence is uncharacterized protein (589 aa).

The RRM domain maps to 242 to 314; it reads TALEVRNIPE…RFIKIFWYNP (73 aa). Disordered stretches follow at residues 322–348, 443–465, and 566–589; these read PKKF…VDPA, ESPA…RGTN, and TSME…GRWR. Ser330 carries the phosphoserine modification. The span at 330–340 shows a compositional bias: low complexity; sequence SPTTSDSSNVE. Thr332 carries the post-translational modification Phosphothreonine. Residue Ser334 is modified to Phosphoserine. Residues 566–579 are compositionally biased toward polar residues; that stretch reads TSMETGESNTSDNM.

It is found in the nucleus. This is an uncharacterized protein from Schizosaccharomyces pombe (strain 972 / ATCC 24843) (Fission yeast).